The primary structure comprises 399 residues: Phosphoglycerate kinase (399 aa).

Residues 24–26 (DLN), Arg41, 64–67 (HLGR), Arg123, and Arg160 each bind substrate. Residues Lys210, Gly298, Glu329, and 355–358 (GGDS) contribute to the ATP site.

It belongs to the phosphoglycerate kinase family. As to quaternary structure, monomer.

Its subcellular location is the cytoplasm. The enzyme catalyses (2R)-3-phosphoglycerate + ATP = (2R)-3-phospho-glyceroyl phosphate + ADP. It functions in the pathway carbohydrate degradation; glycolysis; pyruvate from D-glyceraldehyde 3-phosphate: step 2/5. This is Phosphoglycerate kinase from Salinispora arenicola (strain CNS-205).